Here is a 260-residue protein sequence, read N- to C-terminus: Flap endonuclease Xni (260 aa).

D104 lines the Mg(2+) pocket. Positions 160-249 (VSPQQLTDYW…LNGNLQQLRL (90 aa)) constitute a 5'-3' exonuclease domain. K(+) is bound by residues L171, A172, P180, V182, and I185. The segment at 184–189 (GIGPKS) is interaction with DNA.

It belongs to the Xni family. The cofactor is Mg(2+). It depends on K(+) as a cofactor.

Functionally, has flap endonuclease activity. During DNA replication, flap endonucleases cleave the 5'-overhanging flap structure that is generated by displacement synthesis when DNA polymerase encounters the 5'-end of a downstream Okazaki fragment. The protein is Flap endonuclease Xni of Pectobacterium carotovorum subsp. carotovorum (strain PC1).